We begin with the raw amino-acid sequence, 166 residues long: Phosphopantetheine adenylyltransferase (166 aa).

Serine 9 is a substrate binding site. Residues 9–10 (SF) and histidine 17 each bind ATP. Substrate is bound by residues lysine 41, leucine 74, and lysine 88. Residues 89–91 (GLR), glutamate 99, and 123–129 (YVHLSST) contribute to the ATP site.

It belongs to the bacterial CoaD family. As to quaternary structure, homohexamer. Mg(2+) is required as a cofactor.

The protein resides in the cytoplasm. It carries out the reaction (R)-4'-phosphopantetheine + ATP + H(+) = 3'-dephospho-CoA + diphosphate. It participates in cofactor biosynthesis; coenzyme A biosynthesis; CoA from (R)-pantothenate: step 4/5. Functionally, reversibly transfers an adenylyl group from ATP to 4'-phosphopantetheine, yielding dephospho-CoA (dPCoA) and pyrophosphate. In Paenarthrobacter aurescens (strain TC1), this protein is Phosphopantetheine adenylyltransferase.